Reading from the N-terminus, the 706-residue chain is Ribosomal RNA large subunit methyltransferase K/L (706 aa).

One can recognise a THUMP domain in the interval 43-154 (LMYQSLLWSR…RDMASVALDL (112 aa)).

The protein belongs to the methyltransferase superfamily. RlmKL family.

The protein localises to the cytoplasm. It catalyses the reaction guanosine(2445) in 23S rRNA + S-adenosyl-L-methionine = N(2)-methylguanosine(2445) in 23S rRNA + S-adenosyl-L-homocysteine + H(+). It carries out the reaction guanosine(2069) in 23S rRNA + S-adenosyl-L-methionine = N(2)-methylguanosine(2069) in 23S rRNA + S-adenosyl-L-homocysteine + H(+). Its function is as follows. Specifically methylates the guanine in position 2445 (m2G2445) and the guanine in position 2069 (m7G2069) of 23S rRNA. This is Ribosomal RNA large subunit methyltransferase K/L from Yersinia enterocolitica serotype O:8 / biotype 1B (strain NCTC 13174 / 8081).